Reading from the N-terminus, the 260-residue chain is Imidazole glycerol phosphate synthase subunit HisF (260 aa).

Residues Asp11 and Asp130 contribute to the active site.

This sequence belongs to the HisA/HisF family. As to quaternary structure, heterodimer of HisH and HisF.

It is found in the cytoplasm. The catalysed reaction is 5-[(5-phospho-1-deoxy-D-ribulos-1-ylimino)methylamino]-1-(5-phospho-beta-D-ribosyl)imidazole-4-carboxamide + L-glutamine = D-erythro-1-(imidazol-4-yl)glycerol 3-phosphate + 5-amino-1-(5-phospho-beta-D-ribosyl)imidazole-4-carboxamide + L-glutamate + H(+). Its pathway is amino-acid biosynthesis; L-histidine biosynthesis; L-histidine from 5-phospho-alpha-D-ribose 1-diphosphate: step 5/9. Functionally, IGPS catalyzes the conversion of PRFAR and glutamine to IGP, AICAR and glutamate. The HisF subunit catalyzes the cyclization activity that produces IGP and AICAR from PRFAR using the ammonia provided by the HisH subunit. This Thermomicrobium roseum (strain ATCC 27502 / DSM 5159 / P-2) protein is Imidazole glycerol phosphate synthase subunit HisF.